The chain runs to 764 residues: 5-methyltetrahydropteroyltriglutamate--homocysteine methyltransferase (764 aa).

Residues 16 to 19 (RELK) and Lys121 each bind 5-methyltetrahydropteroyltri-L-glutamate. Residues 440 to 442 (IGS) and Glu493 each bind L-homocysteine. L-methionine contacts are provided by residues 440–442 (IGS) and Glu493. 5-methyltetrahydropteroyltri-L-glutamate contacts are provided by residues 524-525 (RC) and Trp570. Asp608 serves as a coordination point for L-homocysteine. L-methionine is bound at residue Asp608. Glu614 lines the 5-methyltetrahydropteroyltri-L-glutamate pocket. Residues His650, Cys652, and Glu674 each coordinate Zn(2+). His703 serves as the catalytic Proton donor. A Zn(2+)-binding site is contributed by Cys735.

This sequence belongs to the vitamin-B12 independent methionine synthase family. Zn(2+) serves as cofactor.

The catalysed reaction is 5-methyltetrahydropteroyltri-L-glutamate + L-homocysteine = tetrahydropteroyltri-L-glutamate + L-methionine. The protein operates within amino-acid biosynthesis; L-methionine biosynthesis via de novo pathway; L-methionine from L-homocysteine (MetE route): step 1/1. Catalyzes the transfer of a methyl group from 5-methyltetrahydrofolate to homocysteine resulting in methionine formation. In Burkholderia ambifaria (strain ATCC BAA-244 / DSM 16087 / CCUG 44356 / LMG 19182 / AMMD) (Burkholderia cepacia (strain AMMD)), this protein is 5-methyltetrahydropteroyltriglutamate--homocysteine methyltransferase.